The primary structure comprises 129 residues: MSLFSGTIQNLENALSRADIKQKVITNNIANIDTPNYKAKKVSFQNLLDQESSRLEAIKTDYRHVDFSDTDSNYSIVASGDTSYQQNGNNVDVDKEMTELAQNQINYQALVERMNGKFNSLKTVLTGGK.

The protein belongs to the flagella basal body rod proteins family. The basal body constitutes a major portion of the flagellar organelle and consists of a number of rings mounted on a central rod. In Gram-negative bacteria, at least four rings, L, P, S and M are present, whereas Gram-positive bacteria lack the L and P rings. The rod consists of about 26 subunits of FlgG in the distal portion, and FlgB, FlgC and FlgF build up the proximal portion of the rod with about 6 subunits each. Rod assembly occurs by export via the flagellum-specific pathway of its constituent proteins and by their incorporation into the rod structure in the probable order of FlgB, FlgC, FlgF and FlgG. Another protein, FliE, also assembles onto the stable rod structure.

It localises to the bacterial flagellum basal body. Its function is as follows. Structural component of flagellum, the bacterial motility apparatus. Part of the rod structure of flagellar basal body. The polypeptide is Flagellar basal body rod protein FlgB (flgB) (Bacillus subtilis (strain 168)).